A 302-amino-acid chain; its full sequence is Deoxyhypusine hydroxylase (302 aa).

6 HEAT-like PBS-type repeats span residues 23 to 49 (ERFR…AFDD), 54 to 80 (LKHE…VLKD), 87 to 113 (VRHE…YKKD), 175 to 201 (DRYR…GLKD), 206 to 232 (FRHE…NLED), and 239 to 265 (VRHE…YADD). Residues H56, E57, H89, and E90 each coordinate Fe cation. 4 residues coordinate Fe cation: H208, E209, H241, and E242.

It belongs to the deoxyhypusine hydroxylase family. Fe(2+) is required as a cofactor.

It localises to the endoplasmic reticulum membrane. It carries out the reaction [eIF5A protein]-deoxyhypusine + AH2 + O2 = [eIF5A protein]-hypusine + A + H2O. The protein operates within protein modification; eIF5A hypusination. Catalyzes the hydroxylation of the N(6)-(4-aminobutyl)-L-lysine intermediate to form hypusine, an essential post-translational modification only found in mature eIF-5A factor. Essential for organismal viability and plays a role in a wide number of important processes such as cell growth and proliferation, and regulates induction of autophagy and protein synthesis. Has a role in eIF-5A-mediated translational control. The protein is Deoxyhypusine hydroxylase of Drosophila pseudoobscura pseudoobscura (Fruit fly).